The chain runs to 332 residues: Probable thc operon regulatory protein (332 aa).

The 102-residue stretch at 227–328 folds into the HTH araC/xylS-type domain; it reads RLAVDYLEAH…GVSPSEDLRT (102 aa). 2 consecutive DNA-binding regions (H-T-H motif) follow at residues 244 to 265 and 295 to 318; these read AQVA…QNSL and VTEI…KQTF.

In terms of biological role, probably involved in the positive regulation of the thc operon for the degradation of the thiocarbamate herbicide EPTC. In Rhodococcus erythropolis (Arthrobacter picolinophilus), this protein is Probable thc operon regulatory protein (thcR).